We begin with the raw amino-acid sequence, 194 residues long: Peptidyl-tRNA hydrolase (194 aa).

Tyr-17 provides a ligand contact to tRNA. The active-site Proton acceptor is the His-22. TRNA-binding residues include Tyr-68, Asn-70, and Asn-116.

Belongs to the PTH family. In terms of assembly, monomer.

It localises to the cytoplasm. The catalysed reaction is an N-acyl-L-alpha-aminoacyl-tRNA + H2O = an N-acyl-L-amino acid + a tRNA + H(+). In terms of biological role, hydrolyzes ribosome-free peptidyl-tRNAs (with 1 or more amino acids incorporated), which drop off the ribosome during protein synthesis, or as a result of ribosome stalling. Its function is as follows. Catalyzes the release of premature peptidyl moieties from peptidyl-tRNA molecules trapped in stalled 50S ribosomal subunits, and thus maintains levels of free tRNAs and 50S ribosomes. This is Peptidyl-tRNA hydrolase from Pseudoalteromonas translucida (strain TAC 125).